The sequence spans 520 residues: MSNKCDVVVVGGGISGMAAAKLLHDSGLNVVVLEARDRVGGRTYTLRNQKVKYVDLGGSYVGPTQNRILRLAKELGLETYKVNEVERLIHHVKGKSYPFRGPFPPVWNPITYLDHNNFWRTMDDMGREIPSDAPWKAPLAEEWDNMTMKELLDKLCWTESAKQLATLFVNLCVTAETHEVSALWFLWYVKQCGGTTRIISTTNGGQERKFVGGSGQVSERIMDLLGDRVKLERPVIYIDQTRENVLVETLNHEMYEAKYVISAIPPTLGMKIHFNPPLPMMRNQMITRVPLGSVIKCIVYYKEPFWRKKDYCGTMIIDGEEAPVAYTLDDTKPEGNYAAIMGFILAHKARKLARLTKEERLKKLCELYAKVLGSLEALEPVHYEEKNWCEEQYSGGCYTTYFPPGILTQYGRVLRQPVDRIYFAGTETATHWSGYMEGAVEAGERAAREILHAMGKIPEDEIWQSEPESVDVPAQPITTTFLERHLPSVPGLLRLIGLTTIFSATALGFLAHKRGLLVRV.

Ser2 carries the N-acetylserine modification. Residues 2–489 lie on the Cytoplasmic side of the membrane; sequence SNKCDVVVVG…TFLERHLPSV (488 aa). Lys52 carries the post-translational modification N6-acetyllysine. Cys397 carries the post-translational modification S-8alpha-FAD cysteine. A helical; Anchor for type IV membrane protein membrane pass occupies residues 490–516; that stretch reads PGLLRLIGLTTIFSATALGFLAHKRGL. The Mitochondrial intermembrane portion of the chain corresponds to 517–520; the sequence is LVRV.

Monomer, homo- or heterodimer (containing two subunits of similar size). Each subunit contains a covalently bound flavin. Enzymatically active as monomer. It depends on FAD as a cofactor.

The protein resides in the mitochondrion outer membrane. It carries out the reaction a secondary aliphatic amine + O2 + H2O = a primary amine + an aldehyde + H2O2. It catalyses the reaction (R)-adrenaline + O2 + H2O = (R)-3,4-dihydroxymandelaldehyde + methylamine + H2O2. The enzyme catalyses a primary methyl amine + O2 + H2O = an aldehyde + H2O2 + NH4(+). The catalysed reaction is benzylamine + O2 + H2O = benzaldehyde + H2O2 + NH4(+). It carries out the reaction dopamine + O2 + H2O = 3,4-dihydroxyphenylacetaldehyde + H2O2 + NH4(+). It catalyses the reaction tyramine + O2 + H2O = (4-hydroxyphenyl)acetaldehyde + H2O2 + NH4(+). The enzyme catalyses (R)-noradrenaline + O2 + H2O = (R)-3,4-dihydroxymandelaldehyde + H2O2 + NH4(+). The catalysed reaction is 2-phenylethylamine + O2 + H2O = 2-phenylacetaldehyde + H2O2 + NH4(+). It carries out the reaction N-acetylputrescine + O2 + H2O = 4-acetamidobutanal + H2O2 + NH4(+). With respect to regulation, inhibited by deprenyl. In terms of biological role, catalyzes the oxidative deamination of primary and some secondary amines such as neurotransmitters, and exogenous amines including the tertiary amine, neurotoxin 1-methyl-4-phenyl-1,2,3,6-tetrahydropyridine (MPTP), with concomitant reduction of oxygen to hydrogen peroxide and participates in the metabolism of neuroactive and vasoactive amines in the central nervous system and peripheral tissues. Preferentially degrades benzylamine and phenylethylamine. This chain is Amine oxidase [flavin-containing] B, found in Homo sapiens (Human).